The sequence spans 621 residues: KIF-binding protein (621 aa).

A disordered region spans residues 51 to 75 (GPAPEDEDERPEAEDGPGAGDHALG). Positions 54-65 (PEDEDERPEAED) are enriched in acidic residues. Ser-178 carries the phosphoserine modification.

The protein belongs to the KIF-binding protein family. Interacts with KIF1B; positively regulates KIF1B microtubule motor activity. Interacts with STMN2. As to expression, highly expressed in heart, brain, ovary, testis, spinal cord and all specific brain regions examined. Moderate expressed at intermediate level in all other adult tissues examined, as well as in fetal liver and brain. Not expressed in blood leukocytes.

The protein localises to the cytoplasm. It localises to the cytoskeleton. Its function is as follows. Activator of KIF1B plus-end-directed microtubule motor activity. Required for organization of axonal microtubules, and axonal outgrowth and maintenance during peripheral and central nervous system development. The protein is KIF-binding protein of Homo sapiens (Human).